A 482-amino-acid polypeptide reads, in one-letter code: tRNA sulfurtransferase (482 aa).

Positions 61–165 constitute a THUMP domain; that stretch reads LAIRDALTRI…DDRLLLIKGR (105 aa). ATP is bound by residues 183-184, Lys265, Gly287, and Gln296; that span reads LI. Cys344 and Cys456 are joined by a disulfide. In terms of domain architecture, Rhodanese spans 404–482; sequence FGANDVILDI…GFANVKVYRP (79 aa). The active-site Cysteine persulfide intermediate is the Cys456.

Belongs to the ThiI family.

The protein resides in the cytoplasm. It carries out the reaction [ThiI sulfur-carrier protein]-S-sulfanyl-L-cysteine + a uridine in tRNA + 2 reduced [2Fe-2S]-[ferredoxin] + ATP + H(+) = [ThiI sulfur-carrier protein]-L-cysteine + a 4-thiouridine in tRNA + 2 oxidized [2Fe-2S]-[ferredoxin] + AMP + diphosphate. The enzyme catalyses [ThiS sulfur-carrier protein]-C-terminal Gly-Gly-AMP + S-sulfanyl-L-cysteinyl-[cysteine desulfurase] + AH2 = [ThiS sulfur-carrier protein]-C-terminal-Gly-aminoethanethioate + L-cysteinyl-[cysteine desulfurase] + A + AMP + 2 H(+). It participates in cofactor biosynthesis; thiamine diphosphate biosynthesis. Functionally, catalyzes the ATP-dependent transfer of a sulfur to tRNA to produce 4-thiouridine in position 8 of tRNAs, which functions as a near-UV photosensor. Also catalyzes the transfer of sulfur to the sulfur carrier protein ThiS, forming ThiS-thiocarboxylate. This is a step in the synthesis of thiazole, in the thiamine biosynthesis pathway. The sulfur is donated as persulfide by IscS. In Salmonella typhi, this protein is tRNA sulfurtransferase.